We begin with the raw amino-acid sequence, 188 residues long: dCTP deaminase (188 aa).

DCTP is bound by residues 111 to 116 (KSTYAR), 135 to 137 (TLE), Gln-156, Tyr-170, Lys-179, and Gln-180. Glu-137 serves as the catalytic Proton donor/acceptor.

This sequence belongs to the dCTP deaminase family. As to quaternary structure, homotrimer.

It catalyses the reaction dCTP + H2O + H(+) = dUTP + NH4(+). The protein operates within pyrimidine metabolism; dUMP biosynthesis; dUMP from dCTP (dUTP route): step 1/2. Functionally, catalyzes the deamination of dCTP to dUTP. The polypeptide is dCTP deaminase (Rickettsia typhi (strain ATCC VR-144 / Wilmington)).